We begin with the raw amino-acid sequence, 92 residues long: Acyl-CoA-binding domain-containing protein 6 (92 aa).

An ACB domain is found at 3–88 (LKEEFEEHAE…VKQLLEVAAS (86 aa)). Residues 30–34 (YGLYK), lysine 52, lysine 56, and tyrosine 75 contribute to the an acyl-CoA site.

This sequence belongs to the ACBP family. As to quaternary structure, interacts with PDLP8. Mostly expressed in seeds, stems, and siliques, and, to a lower extent, in leaves, flowers, and roots (at protein level). Highly expressed in root and shoot phloem companion cells.

The protein localises to the cytoplasm. Its subcellular location is the cell membrane. In terms of biological role, binds medium- and long-chain acyl-CoA esters with very high affinity. May function as an intracellular carrier of acyl-CoA esters. Confers resistance to cold and freezing. Interacts with phosphatidylcholine and derivatives, but not phosphatidic acid and lysophosphatidylcholine. May be involved in phospholipid metabolism. This Arabidopsis thaliana (Mouse-ear cress) protein is Acyl-CoA-binding domain-containing protein 6 (ACBP6).